A 430-amino-acid polypeptide reads, in one-letter code: Phosphoribosylamine--glycine ligase (430 aa).

The ATP-grasp domain maps to 109 to 314; it reads RGLMNKYGID…FLTIAEHIIN (206 aa). Position 136-192 (136-192) interacts with ATP; the sequence is IREYPGDLAVKPTGLTGGKGVKVMGEQVDREGAVEYAMTLKDQVIILEERLLGEEFT. Residues glutamine 272, glutamate 284, and asparagine 286 each contribute to the Mg(2+) site. Glutamine 272, glutamate 284, and asparagine 286 together coordinate Mn(2+).

This sequence belongs to the GARS family. Mg(2+) serves as cofactor. Mn(2+) is required as a cofactor.

It catalyses the reaction 5-phospho-beta-D-ribosylamine + glycine + ATP = N(1)-(5-phospho-beta-D-ribosyl)glycinamide + ADP + phosphate + H(+). The protein operates within purine metabolism; IMP biosynthesis via de novo pathway; N(1)-(5-phospho-D-ribosyl)glycinamide from 5-phospho-alpha-D-ribose 1-diphosphate: step 2/2. The chain is Phosphoribosylamine--glycine ligase from Methanocorpusculum labreanum (strain ATCC 43576 / DSM 4855 / Z).